We begin with the raw amino-acid sequence, 48 residues long: Acidic phospholipase A2 (48 aa).

3 residues coordinate Ca(2+): tyrosine 27, glycine 29, and glycine 31. An intrachain disulfide couples cysteine 28 to cysteine 44. Histidine 47 is an active-site residue. Aspartate 48 is a Ca(2+) binding site.

The protein belongs to the phospholipase A2 family. Group II subfamily. D49 sub-subfamily. Monomer. Ca(2+) serves as cofactor. Expressed by the venom gland.

It localises to the secreted. It catalyses the reaction a 1,2-diacyl-sn-glycero-3-phosphocholine + H2O = a 1-acyl-sn-glycero-3-phosphocholine + a fatty acid + H(+). Inhibited by EDTA. Inhibited by Ba(2+), Cu(+), Fe(2+) and Zn(2+) ions and, to a lesser extent, by Mn(2+) and Mg(2+) ions. In terms of biological role, snake venom phospholipase A2 (PLA2) that shows myotoxicity and induces paw edema in mice. Exhibits indirect hemolytic activity. Inhibits platelet aggregation induced by ADP and collagen. PLA2 catalyzes the calcium-dependent hydrolysis of the 2-acyl groups in 3-sn-phosphoglycerides. This chain is Acidic phospholipase A2, found in Bothrops pauloensis (Neuwied's lancehead).